The following is a 185-amino-acid chain: Elongation factor P (185 aa).

Belongs to the elongation factor P family.

It localises to the cytoplasm. It functions in the pathway protein biosynthesis; polypeptide chain elongation. Its function is as follows. Involved in peptide bond synthesis. Stimulates efficient translation and peptide-bond synthesis on native or reconstituted 70S ribosomes in vitro. Probably functions indirectly by altering the affinity of the ribosome for aminoacyl-tRNA, thus increasing their reactivity as acceptors for peptidyl transferase. The polypeptide is Elongation factor P (Nitrosomonas europaea (strain ATCC 19718 / CIP 103999 / KCTC 2705 / NBRC 14298)).